Reading from the N-terminus, the 311-residue chain is Putative tenascin-XA (311 aa).

Disordered stretches follow at residues 1–47 and 124–150; these read MEDK…EPRL and LSAE…SQLS. Fibronectin type-III domains follow at residues 41–135, 145–249, and 250–311; these read PPEE…LAPA, RLSQ…SPRD, and LQFS…SCVH.

In terms of tissue distribution, expressed in the adrenal gland.

The chain is Putative tenascin-XA (TNXA) from Homo sapiens (Human).